The chain runs to 456 residues: Chromosomal replication initiator protein DnaA (456 aa).

The tract at residues 1–83 (MTASLWQQCL…LRFDIGNRPH (83 aa)) is domain I, interacts with DnaA modulators. The segment at 83–119 (HPVAVARAPARGADPVNNSQKSWESKAEAKPEPNHKS) is domain II. The segment at 92 to 122 (ARGADPVNNSQKSWESKAEAKPEPNHKSNTN) is disordered. The segment covering 105 to 117 (WESKAEAKPEPNH) has biased composition (basic and acidic residues). Residues 120 to 336 (NTNVNYTFEN…GALNRVIANA (217 aa)) form a domain III, AAA+ region region. ATP is bound by residues G164, G166, K167, and T168. The segment at 337 to 456 (NFTGRAINID…YSNLIRTLSS (120 aa)) is domain IV, binds dsDNA.

It belongs to the DnaA family. Oligomerizes as a right-handed, spiral filament on DNA at oriC.

It localises to the cytoplasm. Functionally, plays an essential role in the initiation and regulation of chromosomal replication. ATP-DnaA binds to the origin of replication (oriC) to initiate formation of the DNA replication initiation complex once per cell cycle. Binds the DnaA box (a 9 base pair repeat at the origin) and separates the double-stranded (ds)DNA. Forms a right-handed helical filament on oriC DNA; dsDNA binds to the exterior of the filament while single-stranded (ss)DNA is stabiized in the filament's interior. The ATP-DnaA-oriC complex binds and stabilizes one strand of the AT-rich DNA unwinding element (DUE), permitting loading of DNA polymerase. After initiation quickly degrades to an ADP-DnaA complex that is not apt for DNA replication. Binds acidic phospholipids. This Aeromonas hydrophila subsp. hydrophila (strain ATCC 7966 / DSM 30187 / BCRC 13018 / CCUG 14551 / JCM 1027 / KCTC 2358 / NCIMB 9240 / NCTC 8049) protein is Chromosomal replication initiator protein DnaA.